A 270-amino-acid chain; its full sequence is Fructose-2,6-bisphosphatase TIGAR (270 aa).

Residue H11 is the Tele-phosphohistidine intermediate of the active site. K50 bears the N6-acetyllysine mark. E89 acts as the Proton donor/acceptor in catalysis.

This sequence belongs to the phosphoglycerate mutase family. As to quaternary structure, interacts with HK2; the interaction increases hexokinase HK2 activity in a hypoxia- and HIF1A-dependent manner, resulting in the regulation of mitochondrial membrane potential, thus increasing NADPH production and decreasing intracellular ROS levels.

The protein localises to the cytoplasm. The protein resides in the nucleus. It localises to the mitochondrion. The catalysed reaction is beta-D-fructose 2,6-bisphosphate + H2O = beta-D-fructose 6-phosphate + phosphate. Functionally, fructose-bisphosphatase hydrolyzing fructose-2,6-bisphosphate as well as fructose-1,6-bisphosphate. Acts as a negative regulator of glycolysis by lowering intracellular levels of fructose-2,6-bisphosphate in a p53/TP53-dependent manner, resulting in the pentose phosphate pathway (PPP) activation and NADPH production. Contributes to the generation of reduced glutathione to cause a decrease in intracellular reactive oxygen species (ROS) content, correlating with its ability to protect cells from oxidative or metabolic stress-induced cell death. Plays a role in promoting protection against cell death during hypoxia by decreasing mitochondria ROS levels in a HK2-dependent manner through a mechanism that is independent of its fructose-bisphosphatase activity. In response to cardiac damage stress, mediates p53-induced inhibition of myocyte mitophagy through ROS levels reduction and the subsequent inactivation of BNIP3. Reduced mitophagy results in an enhanced apoptotic myocyte cell death, and exacerbates cardiac damage. Plays a role in adult intestinal regeneration; contributes to the growth, proliferation and survival of intestinal crypts following tissue ablation. Plays a neuroprotective role against ischemic brain damage by enhancing PPP flux and preserving mitochondria functions. Protects glioma cells from hypoxia- and ROS-induced cell death by inhibiting glycolysis and activating mitochondrial energy metabolism and oxygen consumption in a TKTL1-dependent and p53/TP53-independent manner. Plays a role in cancer cell survival by promoting DNA repair through activating PPP flux in a CDK5-ATM-dependent signaling pathway during hypoxia and/or genome stress-induced DNA damage responses. Involved in intestinal tumor progression. The polypeptide is Fructose-2,6-bisphosphatase TIGAR (Bos taurus (Bovine)).